We begin with the raw amino-acid sequence, 11103 residues long: Colossin-A (11103 aa).

Positions 1 to 35 are cleaved as a signal peptide; sequence MGTIKTKFKNNYLKNSYLFIIYIILFNLVIGIANS. Asn-95, Asn-120, Asn-137, and Asn-198 each carry an N-linked (GlcNAc...) asparagine glycan. Residues 273 to 324 form a Kelch 1 repeat; it reads NLFAVGNYVFFDVNRDGVHETTELFAPNVKVELYDAISSTRLIASTFTDLNG. One can recognise a CNA-B 1 domain in the interval 298-359; sequence APNVKVELYD…SNGPDNVINA (62 aa). N-linked (GlcNAc...) asparagine glycans are attached at residues Asn-372, Asn-386, and Asn-422. One can recognise a CNA-B 2 domain in the interval 423-469; that stretch reads LSGITVQLTTPSHVVLKTAQTDYAGNYVFDDLSEGVYSVHFILPENY. Asn-493 carries an N-linked (GlcNAc...) asparagine glycan. 6 CNA-B domains span residues 551–599, 676–745, 803–871, 931–999, 1057–1095, and 1170–1231; these read LPGV…PDGY, VANV…INLT, APFV…FTLN, AEGV…IDLS, LPNITMTLINNAEGGKVVQSVSTDSKGQYSFTNVPEGDY, and LSNT…FNSS. N-linked (GlcNAc...) asparagine glycosylation occurs at Asn-678. Residues Asn-1059, Asn-1229, and Asn-1239 are each glycosylated (N-linked (GlcNAc...) asparagine). The CNA-B 9 domain occupies 1277–1314; it reads ISNIPLSLISQKTNQIISSVVTDSNGKYQFEDVPPGDY. Asn-1329 carries N-linked (GlcNAc...) asparagine glycosylation. 8 consecutive CNA-B domains span residues 1391–1458, 1494–1530, 1602–1651, 1708–1779, 1824–1891, 1927–1963, 2035–2086, and 2141–2177; these read SDVS…FKLT, LPGVELSLQDSNGKVLDTTTTDESGNYKFDNLLPGDY, LPGV…YKQV, LSDI…VTVK, LPGVELSLQDSNGKVLETTTTDESGNYKFDNLLPGDY, LPGV…QVAQ, and VEGIELNLVDKDGKVIQSTTSGPNGKYQFEDVPPGDY. A glycan (N-linked (GlcNAc...) asparagine) is linked at Asn-1613. The interval 1716 to 1740 is disordered; sequence TDKDGNEISNTKSGPDGKYQFEDVP. 2 N-linked (GlcNAc...) asparagine glycosylation sites follow: Asn-1759 and Asn-1772. The N-linked (GlcNAc...) asparagine glycan is linked to Asn-2046. N-linked (GlcNAc...) asparagine glycosylation is found at Asn-2192 and Asn-2311. CNA-B domains lie at 2254–2321, 2357–2402, 2465–2514, 2571–2640, 2687–2754, 2790–2835, 2898–2947, and 3004–3040; these read SDVS…FKLT, LPGV…TPIG, LPGV…YKQV, LSDI…NFVT, and LEGIELQLVDKDGKVIQSTTSGPDGKYQFEDVPPGDY. Residue Asn-2476 is glycosylated (N-linked (GlcNAc...) asparagine). A disordered region spans residues 2580 to 2603; it reads DKDGNEITNTKSGPDGKYQFEDVP. Asn-2622 carries an N-linked (GlcNAc...) asparagine glycan. N-linked (GlcNAc...) asparagine glycans are attached at residues Asn-2801 and Asn-2909. N-linked (GlcNAc...) asparagine glycosylation is found at Asn-3048, Asn-3055, and Asn-3118. CNA-B domains are found at residues 3117–3184, 3220–3256, 3328–3364, and 3434–3470; these read SNVS…FKLT, LPGVELSLQDPNGIVIQTITTDSDGNYYFDNLLPGDY, LPGVQVIITSSNGTKIADLVTDENGKYALKDQVPGSY, and VEGIELQLVDKDGKVIQSTTSGPDGKYQFEDVPPGDY. Asn-3339 carries an N-linked (GlcNAc...) asparagine glycan. N-linked (GlcNAc...) asparagine glycosylation is present at Asn-3485. Residues 3503-3549 form a Kelch 2 repeat; it reads SCFAVSGPLDNQNLGLSLFYEIGTMVWIDSNNNGKFEQPSDVLKSDV. 3 CNA-B domains span residues 3547–3614, 3650–3686, and 3758–3809; these read SDVS…FKLT, LPGVELSLQDSNGKVLDTTTTDESGSYKFDNLLPGDY, and LPGV…QVAQ. 2 N-linked (GlcNAc...) asparagine glycosylation sites follow: Asn-3769 and Asn-3827. The region spanning 3864–3900 is the CNA-B 33 domain; that stretch reads LSDITIRLTDKDGKVIQSTTSGPDGKYQFEDVPPGDY. N-linked (GlcNAc...) asparagine glycosylation is present at Asn-3915. 8 CNA-B domains span residues 3980–4047, 4083–4128, 4191–4240, 4297–4378, 4425–4492, 4528–4573, 4636–4685, and 4742–4778; these read SDVS…FKLT, LPGV…TPIG, LPGV…YKQV, LSDI…NFVT, and VEGIPLTLIDKYGNSIQSTASGPNGKYQFEDVPPGDY. N-linked (GlcNAc...) asparagine glycosylation is present at Asn-4202. Positions 4286 to 4341 are disordered; sequence NTGKQTDDSPPLSDITIRLTDKDGNEITKTKSRPDGNENSNTKSGPDGKYQFEDVP. Residues 4304–4321 are compositionally biased toward basic and acidic residues; that stretch reads LTDKDGNEITKTKSRPDG. The N-linked (GlcNAc...) asparagine glycan is linked to Asn-4360. Asn-4647 is a glycosylation site (N-linked (GlcNAc...) asparagine). Asn-4792 and Asn-4918 each carry an N-linked (GlcNAc...) asparagine glycan. CNA-B domains lie at 4865 to 4928, 4964 to 5009, 5072 to 5123, and 5178 to 5214; these read ITLT…FKLT, LPGV…TPIG, LPGV…QVAQ, and LEGIELQLVDKDGKVIQSTTSGPNGKYQFEDVPPGDY. Asn-5083 is a glycosylation site (N-linked (GlcNAc...) asparagine). 3 N-linked (GlcNAc...) asparagine glycosylation sites follow: Asn-5229, Asn-5292, and Asn-5348. Residues 5247–5293 form a Kelch 3 repeat; sequence SCFAVSGPLDNQNLGLSPFYEIGTIVWIDSNNNDKFEQPSDIGKSNV. 4 consecutive CNA-B domains span residues 5291–5358, 5394–5430, 5502–5553, and 5608–5644; these read SNVS…FKLT, LPGVELSLQDSNGKVLDTTTTDESGNYKFDNLLPGDY, LPGV…QVAQ, and LSDITIRLTDKDGNEITNTKSGPDGKYQFEDVPPGDY. Asn-5513 carries an N-linked (GlcNAc...) asparagine glycan. Residue Asn-5659 is glycosylated (N-linked (GlcNAc...) asparagine). CNA-B domains lie at 5724–5791, 5827–5872, 5935–5984, and 6041–6077; these read SDVS…FKLT, LPGV…TPIG, LPGV…YKQV, and VEGIELNLVDKDGKVIQSTTSGPDGKYQFEDVPPGDY. Asn-5946 is a glycosylation site (N-linked (GlcNAc...) asparagine). 2 N-linked (GlcNAc...) asparagine glycosylation sites follow: Asn-6092 and Asn-6155. CNA-B domains lie at 6154–6221, 6257–6302, 6365–6416, and 6471–6507; these read SNVS…FKLT, LPGV…TPIG, LPGV…QDAQ, and LSDITIRLTDKDGNEITNTKSGPDGKYQFEDVPPGDY. Residue Asn-6376 is glycosylated (N-linked (GlcNAc...) asparagine). N-linked (GlcNAc...) asparagine glycans are attached at residues Asn-6522 and Asn-6535. CNA-B domains follow at residues 6587 to 6654, 6690 to 6726, 6798 to 6849, and 6904 to 6940; these read SDVS…FKLT, LEGVELSLQDPNGTVLQTITTDESGNYKFDNLLPGDY, LPGV…QVNQ, and VEGIPLTLIDKYGNSIQSTASGPNGKYQFEDVPPGDY. Residues Asn-6701, Asn-6809, and Asn-6848 are each glycosylated (N-linked (GlcNAc...) asparagine). Asn-6954, Asn-7080, Asn-7137, and Asn-7245 each carry an N-linked (GlcNAc...) asparagine glycan. 8 CNA-B domains span residues 7023-7090, 7126-7171, 7234-7285, 7340-7411, 7456-7523, 7559-7596, 7668-7719, and 7774-7810; these read SDVS…FKLT, LAGV…TPIG, LPGV…QDAQ, LSDI…VTVK, LPGVELSLQDSNGKVLDTTTTTDESGNYKFDNLLPGDY, LTGV…QVAQ, and VEGIELNLVDKDDKVIQSTTSGPDGKYQFEDVPPGDY. Positions 7351 to 7372 are disordered; that stretch reads DGNEITNTKSGPDGKYQFEDVP. Asn-7391 and Asn-7404 each carry an N-linked (GlcNAc...) asparagine glycan. Asn-7679 carries N-linked (GlcNAc...) asparagine glycosylation. N-linked (GlcNAc...) asparagine glycosylation is found at Asn-7825 and Asn-7837. CNA-B domains are found at residues 7887–7954, 7990–8035, 8098–8149, 8204–8265, 8313–8374, 8420–8456, and 8528–8587; these read SDVS…FKLT, LPGV…TPIG, LPGV…QVAQ, IPNI…FSLS, VGKS…VVDQ, LPGVELSLQDSNGKVLQTTTTNESGNYKFDNLPQGDY, and LPGI…PFDS. N-linked (GlcNAc...) asparagine glycans are attached at residues Asn-8109 and Asn-8255. N-linked (GlcNAc...) asparagine glycosylation is found at Asn-8441, Asn-8539, Asn-8629, Asn-8636, Asn-8655, Asn-8693, Asn-8753, Asn-8811, Asn-8896, Asn-8930, Asn-8976, Asn-9023, Asn-9073, Asn-9087, Asn-9123, Asn-9137, Asn-9146, Asn-9149, Asn-9186, Asn-9297, Asn-9305, Asn-9349, Asn-9409, Asn-9419, Asn-9533, Asn-9543, Asn-9556, Asn-9601, Asn-9709, Asn-9718, Asn-9786, Asn-9839, Asn-9850, Asn-9867, Asn-9891, Asn-9941, Asn-9957, Asn-9989, Asn-10042, Asn-10096, Asn-10111, Asn-10174, Asn-10267, Asn-10315, Asn-10348, Asn-10360, Asn-10379, Asn-10394, Asn-10431, Asn-10477, Asn-10552, Asn-10581, Asn-10715, Asn-10786, Asn-10802, Asn-10943, and Asn-11018. The Kelch 4 repeat unit spans residues 8592–8638; it reads CFDLLDKSITNANLGLIPLYNIGSDAWLDNLNNGVRRNDSLLVPNVT. The CNA-B 77 domain occupies 8634–8680; it reads VPNVTMSLYDNNGNLIETTITNSSGKYQFNDIQPGSYCVRATVPSNY. In terms of domain architecture, CNA-B 78 spans 8751–8810; it reads LPNVTVQLYDKVSGNILAATRSDDKGGYVVPNLLPSADYCVQFEVPPGYIVVVDSDDSVT. The CNA-B 79 domain maps to 8965–9014; sequence LPGVSVSLFSPNGTSIANTITDENGKYAFKDQVPGSYCIKMIIPPHYQQV. One can recognise a CNA-B 80 domain in the interval 9071 to 9107; sequence VPNITMTLLDSQGKQINSTITNANGFYQFVDVAPGNY. Positions 9185-9220 constitute a CNA-B 81 domain; that stretch reads ANVSLSLVNTGNSEIKTTTTNSQGKYSFGQLLAGNY. One can recognise a CNA-B 82 domain in the interval 9299–9332; sequence TITLTPNNTALPTQTTTTDVNGNYRFDNLVVGNY. CNA-B domains lie at 9407 to 9447 and 9531 to 9569; these read LVNI…VVQF and MANITVFLRSGSNLSQTIATTTTDANGTYIFTHLAPGNY. The region spanning 9659-9728 is the CNA-B 85 domain; sequence VEGITVRIYD…ATGYISIDLS (70 aa). The CNA-B 86 domain maps to 10044–10103; sequence TLFNADGSTPNDIFGKPIQMAVTDVNGKYSIPNVPPGSYYMTVSIPPRYIISNFTTTGLV. In terms of domain architecture, CNA-B 87 spans 10172-10236; that stretch reads LPNVTVLLLN…ITPTKLVSTS (65 aa). The CNA-B 88 domain occupies 10313 to 10370; the sequence is PGNFTVQLKSANQAVNGGLTTVPIGTVVATSPVAANGSFSIPNLQLGNYTLTLIPPSG.

Belongs to the serine-aspartate repeat-containing protein (SDr) family.

Its subcellular location is the secreted. The chain is Colossin-A (colA) from Dictyostelium discoideum (Social amoeba).